An 884-amino-acid polypeptide reads, in one-letter code: Protein argonaute-4 (884 aa).

Residues 242–361 (PVIEFMCEVL…LPLEVCNIVA (120 aa)) form the PAZ domain. Positions 532–843 (LIVVILPGKT…VAFRARYHLV (312 aa)) constitute a Piwi domain. The tract at residues 848–870 (DSAEGSHVSGQSNGRDPQALAKA) is disordered.

The protein belongs to the argonaute family. Ago subfamily.

The protein localises to the cytoplasm. The protein resides in the P-body. Its function is as follows. Required for RNA-mediated gene silencing (RNAi). Binds to short RNAs such as microRNAs (miRNAs) and represses the translation of mRNAs which are complementary to them. Lacks endonuclease activity and does not appear to cleave target mRNAs. This is Protein argonaute-4 (ago4) from Xenopus laevis (African clawed frog).